We begin with the raw amino-acid sequence, 400 residues long: Involucrin (400 aa).

3 disordered regions span residues 1–196, 273–312, and 333–381; these read MSQQ…HLKQ, KEEV…EQQL, and KRDE…KGEV. 3 stretches are compositionally biased toward low complexity: residues 78 to 159, 169 to 186, and 279 to 292; these read QQQQ…QQHQ, EQQQ…GQQE, and EQQQ…QQHQ. A compositionally biased stretch (basic and acidic residues) spans 333–344; it reads KRDEQLGKKEEQ. Low complexity predominate over residues 346–358; that stretch reads LEPSEQQEGLLEQ.

The protein belongs to the involucrin family. As to quaternary structure, directly or indirectly cross-linked to cornifelin (CNFN). Substrate of transglutaminase. Specific glutamines or lysines are cross-linked to keratins, desmoplakin and to inter involucrin molecules. In terms of tissue distribution, keratinocytes of epidermis and other stratified squamous epithelia.

It is found in the cytoplasm. Functionally, part of the insoluble cornified cell envelope (CE) of stratified squamous epithelia. The chain is Involucrin (IVL) from Tupaia glis (Common tree shrew).